The following is a 574-amino-acid chain: Potassium-transporting ATPase potassium-binding subunit (574 aa).

10 helical membrane passes run 7 to 27 (IELG…GTHL), 65 to 85 (IEYA…SYLI), 136 to 156 (FGLA…AAAL), 175 to 195 (LIRI…IILL), 264 to 284 (FVEM…FGLS), 292 to 312 (WSIW…CFIF), 390 to 410 (GLYG…LMIG), 427 to 447 (MAVL…ALAL), 494 to 514 (LLLG…ILAI), and 534 to 554 (GWLF…LNFF).

Belongs to the KdpA family. As to quaternary structure, the system is composed of three essential subunits: KdpA, KdpB and KdpC.

The protein resides in the cell inner membrane. Its function is as follows. Part of the high-affinity ATP-driven potassium transport (or Kdp) system, which catalyzes the hydrolysis of ATP coupled with the electrogenic transport of potassium into the cytoplasm. This subunit binds the periplasmic potassium ions and delivers the ions to the membrane domain of KdpB through an intramembrane tunnel. The sequence is that of Potassium-transporting ATPase potassium-binding subunit from Methylacidiphilum infernorum (isolate V4) (Methylokorus infernorum (strain V4)).